The chain runs to 378 residues: Tetraacyldisaccharide 4'-kinase (378 aa).

Ala-63 to Thr-70 is an ATP binding site.

The protein belongs to the LpxK family.

The enzyme catalyses a lipid A disaccharide + ATP = a lipid IVA + ADP + H(+). The protein operates within glycolipid biosynthesis; lipid IV(A) biosynthesis; lipid IV(A) from (3R)-3-hydroxytetradecanoyl-[acyl-carrier-protein] and UDP-N-acetyl-alpha-D-glucosamine: step 6/6. In terms of biological role, transfers the gamma-phosphate of ATP to the 4'-position of a tetraacyldisaccharide 1-phosphate intermediate (termed DS-1-P) to form tetraacyldisaccharide 1,4'-bis-phosphate (lipid IVA). In Anaeromyxobacter dehalogenans (strain 2CP-C), this protein is Tetraacyldisaccharide 4'-kinase.